A 208-amino-acid chain; its full sequence is Uracil phosphoribosyltransferase (208 aa).

5-phospho-alpha-D-ribose 1-diphosphate is bound by residues R78, R103, and 130–138; that span reads DPMLATGGS. Uracil contacts are provided by residues I193 and 198–200; that span reads GDA. D199 provides a ligand contact to 5-phospho-alpha-D-ribose 1-diphosphate.

It belongs to the UPRTase family. Mg(2+) is required as a cofactor.

The enzyme catalyses UMP + diphosphate = 5-phospho-alpha-D-ribose 1-diphosphate + uracil. It functions in the pathway pyrimidine metabolism; UMP biosynthesis via salvage pathway; UMP from uracil: step 1/1. With respect to regulation, allosterically activated by GTP. Its function is as follows. Catalyzes the conversion of uracil and 5-phospho-alpha-D-ribose 1-diphosphate (PRPP) to UMP and diphosphate. The protein is Uracil phosphoribosyltransferase of Haemophilus ducreyi (strain 35000HP / ATCC 700724).